An 887-amino-acid chain; its full sequence is Bifunctional uridylyltransferase/uridylyl-removing enzyme (887 aa).

The interval 1-337 is uridylyltransferase; sequence MINTSPLLNY…RLPNYERKIE (337 aa). The tract at residues 339–699 is uridylyl-removing; the sequence is VNDHFKIVDN…AHRKAAQDAV (361 aa). An HD domain is found at 457–579; it reads VDAHTLLLLR…LGDMEHLDYL (123 aa). ACT domains follow at residues 700–782 and 809–887; these read QIFI…LMQR and MVEI…ICQH.

The protein belongs to the GlnD family. Requires Mg(2+) as cofactor.

It catalyses the reaction [protein-PII]-L-tyrosine + UTP = [protein-PII]-uridylyl-L-tyrosine + diphosphate. It carries out the reaction [protein-PII]-uridylyl-L-tyrosine + H2O = [protein-PII]-L-tyrosine + UMP + H(+). With respect to regulation, uridylyltransferase (UTase) activity is inhibited by glutamine, while glutamine activates uridylyl-removing (UR) activity. Functionally, modifies, by uridylylation and deuridylylation, the PII regulatory proteins (GlnB and homologs), in response to the nitrogen status of the cell that GlnD senses through the glutamine level. Under low glutamine levels, catalyzes the conversion of the PII proteins and UTP to PII-UMP and PPi, while under higher glutamine levels, GlnD hydrolyzes PII-UMP to PII and UMP (deuridylylation). Thus, controls uridylylation state and activity of the PII proteins, and plays an important role in the regulation of nitrogen assimilation and metabolism. In Acinetobacter baumannii (strain AB307-0294), this protein is Bifunctional uridylyltransferase/uridylyl-removing enzyme.